The following is a 59-amino-acid chain: MFAGLPSLSHEQQQKAVERIQELMSQGMSSGQAIAQVADELRATHTGERIVARFEDEDE.

The protein belongs to the UPF0181 family.

This Citrobacter koseri (strain ATCC BAA-895 / CDC 4225-83 / SGSC4696) protein is UPF0181 protein CKO_01169.